Here is a 503-residue protein sequence, read N- to C-terminus: 26S proteasome non-ATPase regulatory subunit 5 (503 aa).

Ala2 carries the N-acetylalanine modification.

Belongs to the proteasome subunit S5B/HSM3 family. Interacts with PSMC1, PSMC2, PSMD1 and PSMD6. Part of transient complex containing PSMD5, PSMC2, PSMC1 and PSMD2 formed during the assembly of the 26S proteasome.

Functionally, acts as a chaperone during the assembly of the 26S proteasome, specifically of the base subcomplex of the PA700/19S regulatory complex (RC). In the initial step of the base subcomplex assembly is part of an intermediate PSMD5:PSMC2:PSMC1:PSMD2 module which probably assembles with a PSMD10:PSMC4:PSMC5:PAAF1 module followed by dissociation of PSMD5. The polypeptide is 26S proteasome non-ATPase regulatory subunit 5 (PSMD5) (Bos taurus (Bovine)).